Reading from the N-terminus, the 398-residue chain is MSDTLLNPYFGEFGGMYVPEILVPVLKQLEQAFVEAQNDPTFQAEFADLLKNYAGRPTALTLCRNLTKGTKTKLYLKREDLLHGGAHKTNQVLGQILLAKRMGKTRIIAETGAGQHGVATALACAMLDMPCRVYMGAKDVERQSPNVFRMRLMGAEVIPVQKGSCSLKDACCEAMRDWSANYETTHYLLGTAAGPHPFPTIVREFQKMIGEETKRQILEREGRLPDAVIAAVGGGSNAIGMFADFIDESNVRLIGVEPAGKGIETGEHGAPLKHGTTGIYFGMKSPIMQDKDGQIEESYSISAGLDFPSVGPQHAYLNEIGRAEYVSITDEEALNAFQELAKHEGIIPALESSHALAYALKLIKQNPEKEQLLVVNLSGRGDKDIFTVDKILTEKGMK.

Residue Lys88 is modified to N6-(pyridoxal phosphate)lysine.

It belongs to the TrpB family. In terms of assembly, tetramer of two alpha and two beta chains. Requires pyridoxal 5'-phosphate as cofactor.

The enzyme catalyses (1S,2R)-1-C-(indol-3-yl)glycerol 3-phosphate + L-serine = D-glyceraldehyde 3-phosphate + L-tryptophan + H2O. It participates in amino-acid biosynthesis; L-tryptophan biosynthesis; L-tryptophan from chorismate: step 5/5. The beta subunit is responsible for the synthesis of L-tryptophan from indole and L-serine. The polypeptide is Tryptophan synthase beta chain (Haemophilus influenzae (strain PittGG)).